A 415-amino-acid polypeptide reads, in one-letter code: Amylovoran biosynthesis protein AmsJ (415 aa).

It belongs to the polysaccharide pyruvyl transferase family.

Its pathway is glycan metabolism; exopolysaccharide biosynthesis. Functionally, involved in the biosynthesis of amylovoran which functions as a virulence factor. This chain is Amylovoran biosynthesis protein AmsJ (amsJ), found in Erwinia amylovora (Fire blight bacteria).